The primary structure comprises 424 residues: UDP-sugar transporter protein SLC35A5 (424 aa).

Over 1-8 (MEKQCCSH) the chain is Cytoplasmic. A helical transmembrane segment spans residues 9-29 (PVICSLSTMYTFLLGAIFIAL). At 30 to 53 (SSSRILLVKYSANEENKYDYLPTT) the chain is on the lumenal side. Residues 54–74 (VNVCSELVKLVFCVLVSFCVI) form a helical membrane-spanning segment. Over 75–93 (KKDHQSRNLKYASWKEFSD) the chain is Cytoplasmic. A helical membrane pass occupies residues 94-116 (FMKWSIPAFLYFLDNLIVFYVLS). At 117-119 (YLQ) the chain is on the lumenal side. A helical transmembrane segment spans residues 120–142 (PAMAVIFSNFSIITTALLFRIVL). Residues 143-147 (KRRLN) lie on the Cytoplasmic side of the membrane. Residues 148–168 (WIQWASLLTLFLSIVALTAGT) form a helical membrane-spanning segment. Residues 169–228 (KTLQHNLAGRGFHHDAFFSPSNSCLLFRSECPRKDNCTAKEWTFPEAKWNTTARVFSHIR) are Lumenal-facing. N-linked (GlcNAc...) asparagine glycosylation is present at N204. Residues 229–249 (LGMGHVLIIVQCFISSMANIY) form a helical membrane-spanning segment. The Cytoplasmic segment spans residues 250–263 (NEKILKEGNQLTES). A helical transmembrane segment spans residues 264 to 284 (IFIQNSKLYFFGILFNGLTLG). Residues 285 to 303 (LQRSNRDQIKNCGFFYGHS) are Lumenal-facing. A helical transmembrane segment spans residues 304-324 (AFSVALIFVTAFQGLSVAFIL). At 325–330 (KFLDNM) the chain is on the cytoplasmic side. Residues 331–351 (FHVLMAQVTTVIITTVSVLVF) traverse the membrane as a helical segment. Residues 352 to 354 (DFR) are Lumenal-facing. Residues 355 to 375 (PSLEFFLEAPSVLLSIFIYNA) form a helical membrane-spanning segment. Residues 376–424 (SKPQVPEYAPRQERIRDLSGNLWERSSGDGEELERLTKPKSDESDEDTF) lie on the Cytoplasmic side of the membrane. S394, S416, and S419 each carry phosphoserine. The segment at 397-424 (LWERSSGDGEELERLTKPKSDESDEDTF) is disordered. The span at 408–417 (LERLTKPKSD) shows a compositional bias: basic and acidic residues.

The protein belongs to the nucleotide-sugar transporter family. SLC35A subfamily. In terms of assembly, probably forms homooligomers and heterooligomers with SLC35A1, SLC35A2, SLC35A3 and SLC35A4.

It localises to the golgi apparatus membrane. It catalyses the reaction UMP(out) + UDP-alpha-D-glucuronate(in) = UMP(in) + UDP-alpha-D-glucuronate(out). The catalysed reaction is UMP(out) + UDP-N-acetyl-alpha-D-glucosamine(in) = UMP(in) + UDP-N-acetyl-alpha-D-glucosamine(out). It carries out the reaction UDP-N-acetyl-alpha-D-galactosamine(in) + UMP(out) = UDP-N-acetyl-alpha-D-galactosamine(out) + UMP(in). In terms of biological role, probable UDP-sugar:UMP transmembrane antiporter involved in UDP-alpha-D-glucuronate/UDP-GlcA, UDP-GlcNAc/UDP-N-acetyl-alpha-D-glucosamine and UDP-N-acetyl-alpha-D-galactosamine/UDP-GalNAc transport from the cytosol to the lumen of the Golgi. This chain is UDP-sugar transporter protein SLC35A5, found in Homo sapiens (Human).